The following is a 99-amino-acid chain: Nucleoid-associated protein LL0120 (99 aa).

The protein belongs to the YbaB/EbfC family. In terms of assembly, homodimer.

It is found in the cytoplasm. Its subcellular location is the nucleoid. In terms of biological role, binds to DNA and alters its conformation. May be involved in regulation of gene expression, nucleoid organization and DNA protection. The protein is Nucleoid-associated protein LL0120 (ybcG) of Lactococcus lactis subsp. lactis (strain IL1403) (Streptococcus lactis).